Consider the following 528-residue polypeptide: Low affinity inorganic phosphate transporter 4 (528 aa).

Topologically, residues 1–18 (MALEVLEALDSARTQWYH) are cytoplasmic. A helical membrane pass occupies residues 19–39 (VTAIVIAGMGFFTDAYDLFCI). At 40–68 (TTVSKLLGRLYYFDPSTGKPGKLPNNVNN) the chain is on the extracellular side. The helical transmembrane segment at 69–89 (LVTGVALVGTLSGQLFFGYLG) threads the bilayer. The Cytoplasmic portion of the chain corresponds to 90-96 (DKLGRKK). The chain crosses the membrane as a helical span at residues 97–117 (VYGVTLILMVACAICSGLSFG). The Extracellular segment spans residues 118–122 (ASAKS). The helical transmembrane segment at 123-143 (VMGTLCFFRFWLGFGIGGDYP) threads the bilayer. Residues 144 to 158 (LSATIMSEYANKRTR) are Cytoplasmic-facing. The helical transmembrane segment at 159-179 (GAFIAAVFAMQGVGIIFAGLV) threads the bilayer. The Extracellular portion of the chain corresponds to 180–208 (SMCLSAGFKASYHAPSFHDDPIMSTQPQG). Residues 209 to 229 (DLMWRLVLMIGAVPAAMTYYW) traverse the membrane as a helical segment. Residues 230–292 (RMKMPETGRY…NEFFTRHGRH (63 aa)) lie on the Cytoplasmic side of the membrane. Residues 293–313 (LIGTMTSWFLLDIAFYSQNLT) traverse the membrane as a helical segment. The Extracellular segment spans residues 314–341 (QKDIFPAMGLIDKDFEMNAIQEVFETSR). A helical transmembrane segment spans residues 342 to 362 (AMFVIALFGTFPGYWFTVFFI). The Cytoplasmic segment spans residues 363 to 371 (EKLGRYKIQ). Residues 372-392 (LIGFFMMSVFMFIIGVKYDYL) form a helical membrane-spanning segment. Over 393–401 (RNENSHMFA) the chain is Extracellular. Residues 402-422 (LLYGLTFFFANFGPNSTTFVL) traverse the membrane as a helical segment. Residues 423 to 433 (PAELFPTRVRS) lie on the Cytoplasmic side of the membrane. The helical transmembrane segment at 434 to 454 (TCHALSAAAGKAGAMVGAFGI) threads the bilayer. Topologically, residues 455–467 (QNYTQKGEQKQIK) are extracellular. An N-linked (GlcNAc...) asparagine glycan is attached at Asn456. Residues 468-488 (HAMMILAVTNLIGFFCSFLVT) traverse the membrane as a helical segment. At 489-528 (ETKGRSLEEISGEDGRESELTPTPPNNRVPTRQEPRSETM) the chain is on the cytoplasmic side. Basic and acidic residues-rich tracts occupy residues 496-507 (EEISGEDGRESE) and 519-528 (TRQEPRSETM). The tract at residues 496-528 (EEISGEDGRESELTPTPPNNRVPTRQEPRSETM) is disordered.

Belongs to the major facilitator superfamily. Phosphate:H(+) symporter (TC 2.A.1.9) family. In terms of tissue distribution, expressed only in mycorrhizal roots, exclusively in cortical cells containing arbuscules, upon arbuscular mycorrhizal (AM) symbiosis with AM fungi (e.g. Gigaspora margarita and Funnelliformis mosseae). Also observed in root tips of non-mycorrhizal roots, in a phosphate (Pi) depended-manner, highest expression levels being observed in low Pi conditions.

The protein localises to the cell membrane. It catalyses the reaction phosphate(in) + H(+)(in) = phosphate(out) + H(+)(out). Low-affinity transporter for external inorganic phosphate (Pi) probably involved in the acquisition of phosphate released by arbuscular mycorrhizal (AM) fungi (e.g. Gigaspora margarita and Funnelliformis mosseae) during AM symbiosis; required for propper mycorrhizal arbuscule morphology. Acts as a Pi-sensing machinery at the root tip level, independently of AM fungi, involved in the regulation of early root branching and lateral roots formation. The protein is Low affinity inorganic phosphate transporter 4 of Lotus japonicus (Lotus corniculatus var. japonicus).